The following is a 622-amino-acid chain: Low affinity potassium transport system protein Kup (622 aa).

Helical transmembrane passes span 9–29 (LPAI…TSPL), 49–69 (VFGF…IKYL), 103–123 (VIMG…TPAI), 137–157 (PQLD…LFMI), 165–185 (VGKL…GLGL), 213–233 (VSFI…ALYA), 247–267 (WFTV…ALLL), 276–296 (PFFL…AALA), 337–357 (IYIP…IVSF), 363–383 (LAAA…ILST), 396–416 (FVAL…TANL), and 419–439 (LLSG…VMTT).

This sequence belongs to the HAK/KUP transporter (TC 2.A.72) family.

It localises to the cell inner membrane. It catalyses the reaction K(+)(in) + H(+)(in) = K(+)(out) + H(+)(out). Its function is as follows. Responsible for the low-affinity transport of potassium into the cell. Likely operates as a K(+):H(+) symporter. The polypeptide is Low affinity potassium transport system protein Kup (Shigella flexneri serotype 5b (strain 8401)).